The sequence spans 123 residues: MQNKIQVKSVEKRENALIFCAENSEIEVKELSARNHVLVDSDNLSFLYILENESSFIYVSIPHTCWEAMHEAMNNDVVMFVRVNDIEMELEGLKEEVEYLVENIEGNANYGEELVTAVEKVFL.

The protein belongs to the UPF0738 family.

The polypeptide is UPF0738 protein BCE_1319 (Bacillus cereus (strain ATCC 10987 / NRS 248)).